A 203-amino-acid chain; its full sequence is Ras-related protein Rab-7L1 (203 aa).

6 residues coordinate GTP: serine 33, lysine 34, histidine 35, tyrosine 36, lysine 37, and threonine 39. Residues 36 to 44 carry the Effector region motif; sequence YKSTVGVDF. Residue threonine 71 is modified to Phosphothreonine; by LRRK2. Position 72 is a phosphoserine; by LRRK2 (serine 72). GTP is bound by residues lysine 126, valine 156, and lysine 157. S-geranylgeranyl cysteine attachment occurs at residues cysteine 202 and cysteine 203.

The protein belongs to the small GTPase superfamily. Rab family. Interacts with LRRK2 (via the N-terminus); this interaction is direct and stimulates kinase activity. In case of Salmonella enterica serovar Typhimurium (S.typhimurium) infection, is proteolytically cleaved between Gly-41 and Val-42 by the GtgE viral protease encoded on the Gifsy-2 lysogen bacteriophage, which therefore prevents the recruitment of RAB29 to S.typhimurium-containing vacuoles. In contrast, no proteolytically cleavage is detected in S.typhi-infected cells. Ubiquitous.

It localises to the cell membrane. Its subcellular location is the cytoplasm. The protein localises to the perinuclear region. It is found in the golgi apparatus. The protein resides in the golgi apparatus membrane. It localises to the trans-Golgi network. Its subcellular location is the vacuole. The protein localises to the cytoskeleton. Functionally, the small GTPases Rab are key regulators in vesicle trafficking. Essential for maintaining the integrity of the endosome-trans-Golgi network structure. Together with LRRK2, plays a role in the retrograde trafficking pathway for recycling proteins, such as mannose 6 phosphate receptor (M6PR), between lysosomes and the Golgi apparatus in a retromer-dependent manner. Recruits LRRK2 to the Golgi complex and stimulates LRRK2 kinase activity. Stimulates phosphorylation of RAB10 'Thr-73' by LRRK2. Regulates neuronal process morphology in the intact central nervous system (CNS). May play a role in the formation of typhoid toxin transport intermediates during Salmonella enterica serovar Typhi (S.typhi) epithelial cell infection. The chain is Ras-related protein Rab-7L1 (RAB29) from Homo sapiens (Human).